The sequence spans 140 residues: Interleukin-4 (140 aa).

The first 20 residues, 1–20, serve as a signal peptide directing secretion; the sequence is MGLNPQLVVILLFFLECTRS. 3 disulfide bridges follow: Cys-25-Cys-107, Cys-47-Cys-87, and Cys-69-Cys-114. Residues Asn-61, Asn-91, and Asn-117 are each glycosylated (N-linked (GlcNAc...) asparagine).

The protein belongs to the IL-4/IL-13 family. In terms of assembly, interacts with IL4R. Interacts with IL13RA1.

The protein localises to the secreted. Its function is as follows. Cytokine secreted primarily by mast cells, T-cells, eosinophils, and basophils that plays a role in regulating antibody production, hematopoiesis and inflammation, and the development of effector T-cell responses. Induces the expression of class II MHC molecules on resting B-cells. Enhances both secretion and cell surface expression of IgE and IgG1. Also regulates the expression of the low affinity Fc receptor for IgE (CD23) on both lymphocytes and monocytes. Positively regulates IL31RA expression in macrophages. Stimulates autophagy in dendritic cells by interfering with mTORC1 signaling and through the induction of RUFY4. In addition, plays a critical role in higher functions of the normal brain, such as memory and learning. Upon binding to IL4, IL4R receptor dimerizes either with the common IL2R gamma chain/IL2RG to produce the type 1 signaling complex, located mainly on hematopoietic cells, or with the IL13RA1 to produce the type 2 complex, which is also expressed on nonhematopoietic cells. Engagement of both types of receptors initiates JAK3 and to a lower extend JAK1 phosphorylation leading to activation of the signal transducer and activator of transcription 6/STAT6. In Mus musculus (Mouse), this protein is Interleukin-4 (Il4).